The following is a 525-amino-acid chain: Peptide chain release factor 3 (525 aa).

Residues 11–279 (NNRRTFAIIS…AYLKYAPKPA (269 aa)) enclose the tr-type G domain. Residues 20–27 (SHPDAGKT), 88–92 (DTPGH), and 142–145 (NKLD) each bind GTP.

The protein belongs to the TRAFAC class translation factor GTPase superfamily. Classic translation factor GTPase family. PrfC subfamily.

It localises to the cytoplasm. Functionally, increases the formation of ribosomal termination complexes and stimulates activities of RF-1 and RF-2. It binds guanine nucleotides and has strong preference for UGA stop codons. It may interact directly with the ribosome. The stimulation of RF-1 and RF-2 is significantly reduced by GTP and GDP, but not by GMP. The chain is Peptide chain release factor 3 from Ligilactobacillus salivarius (strain UCC118) (Lactobacillus salivarius).